A 478-amino-acid polypeptide reads, in one-letter code: GTPase Obg (478 aa).

The Obg domain maps to 2–159 (TTFVDRVELH…RDIVLELKTV (158 aa)). The tract at residues 61–87 (HHSPHRKATNGQPGAGDNRSGKDGQDL) is disordered. The region spanning 160-330 (ADVALVGYPS…LSFALAGIIA (171 aa)) is the OBG-type G domain. Residues 166-173 (GYPSAGKS), 191-195 (FTTLV), 212-215 (DVPG), 282-285 (NKVD), and 311-313 (SAI) contribute to the GTP site. Residues Ser-173 and Thr-193 each coordinate Mg(2+). The OCT domain occupies 348–430 (PRAVDDAGFT…ENAVVFDWEP (83 aa)). The interval 436–478 (AEMLGRRGEDHRLEEPRPAAQRRRERDAERDDAEKEYDEFDPF) is disordered. Over residues 439–468 (LGRRGEDHRLEEPRPAAQRRRERDAERDDA) the composition is skewed to basic and acidic residues. A compositionally biased stretch (acidic residues) spans 469-478 (EKEYDEFDPF).

The protein belongs to the TRAFAC class OBG-HflX-like GTPase superfamily. OBG GTPase family. As to quaternary structure, monomer. The cofactor is Mg(2+).

It is found in the cytoplasm. An essential GTPase which binds GTP, GDP and possibly (p)ppGpp with moderate affinity, with high nucleotide exchange rates and a fairly low GTP hydrolysis rate. Plays a role in control of the cell cycle, stress response, ribosome biogenesis and in those bacteria that undergo differentiation, in morphogenesis control. This chain is GTPase Obg, found in Streptomyces griseus subsp. griseus (strain JCM 4626 / CBS 651.72 / NBRC 13350 / KCC S-0626 / ISP 5235).